The following is a 225-amino-acid chain: NAD(P)H-quinone oxidoreductase subunit K, chloroplastic (225 aa).

4 residues coordinate [4Fe-4S] cluster: C43, C44, C108, and C139.

It belongs to the complex I 20 kDa subunit family. As to quaternary structure, NDH is composed of at least 16 different subunits, 5 of which are encoded in the nucleus. [4Fe-4S] cluster serves as cofactor.

It localises to the plastid. It is found in the chloroplast thylakoid membrane. The catalysed reaction is a plastoquinone + NADH + (n+1) H(+)(in) = a plastoquinol + NAD(+) + n H(+)(out). It catalyses the reaction a plastoquinone + NADPH + (n+1) H(+)(in) = a plastoquinol + NADP(+) + n H(+)(out). Its function is as follows. NDH shuttles electrons from NAD(P)H:plastoquinone, via FMN and iron-sulfur (Fe-S) centers, to quinones in the photosynthetic chain and possibly in a chloroplast respiratory chain. The immediate electron acceptor for the enzyme in this species is believed to be plastoquinone. Couples the redox reaction to proton translocation, and thus conserves the redox energy in a proton gradient. The polypeptide is NAD(P)H-quinone oxidoreductase subunit K, chloroplastic (Gossypium barbadense (Sea Island cotton)).